A 289-amino-acid chain; its full sequence is Nucleotide-binding protein FRAAL4592 (289 aa).

13–20 provides a ligand contact to ATP; that stretch reads GLSGAGRS. 64 to 67 lines the GTP pocket; it reads DVRG.

It belongs to the RapZ-like family.

Its function is as follows. Displays ATPase and GTPase activities. In Frankia alni (strain DSM 45986 / CECT 9034 / ACN14a), this protein is Nucleotide-binding protein FRAAL4592.